The sequence spans 192 residues: MLTLPESLRDAFKEPLGPVTIDADELLAAAAETRGERAAPDAPIIAVGDVVTYHLREAGRVPDVALIDGKTERETVDAEIGSALAAADDRRLSVENPAASLSAELLEALSEALSDADPVIIEVTGEEDLAALPAILAAPDGASVVYGQPGEGMVRVAVTPESRTEARELFEALDGDVEAAYKALGRVPDGDR.

GTP is bound by residues aspartate 49, valine 50, valine 51, aspartate 68, lysine 70, and glutamate 127.

The protein belongs to the GTP-dependent DPCK family.

It catalyses the reaction 3'-dephospho-CoA + GTP = GDP + CoA + H(+). It functions in the pathway cofactor biosynthesis; coenzyme A biosynthesis. Functionally, catalyzes the GTP-dependent phosphorylation of the 3'-hydroxyl group of dephosphocoenzyme A to form coenzyme A (CoA). This Halorubrum lacusprofundi (strain ATCC 49239 / DSM 5036 / JCM 8891 / ACAM 34) protein is GTP-dependent dephospho-CoA kinase.